Here is a 568-residue protein sequence, read N- to C-terminus: Dual specificity tyrosine-phosphorylation-regulated kinase 3 (568 aa).

The segment at 1–168 (MKWKEKLGDG…HGVIGGPNNG (168 aa)) is disordered. The span at 77–114 (SNTVQSDGISDSEKCSPTVSQGKSSDCLNTVKSNSSSK) shows a compositional bias: polar residues. In terms of domain architecture, Protein kinase spans 189–502 (YEVLKIIGKG…PAQALRHPWI (314 aa)). ATP is bound by residues 195–203 (IGKGSFGQV) and K218. The active-site Proton acceptor is the D315. S330 carries the post-translational modification Phosphoserine. At Y349 the chain carries Phosphotyrosine. Residues 448-461 (RSRRGKKRGPPGSK) carry the Nuclear localization signal motif.

Belongs to the protein kinase superfamily. CMGC Ser/Thr protein kinase family. MNB/DYRK subfamily. In terms of assembly, interacts with SIRT1. Mg(2+) serves as cofactor. Post-translationally, protein kinase activity is activated following autophosphorylation at Tyr-349. Autophosphorylation at Ser-330 stabilizes the protein and enhances the protein kinase activity. Ubiquitinated at anaphase by the anaphase-promoting complex (APC/C), leading to its degradation by the proteasome.

The protein resides in the nucleus. Its subcellular location is the cytoplasm. It localises to the nucleus speckle. It is found in the cytoplasmic granule. The protein localises to the cytoskeleton. The protein resides in the microtubule organizing center. Its subcellular location is the centrosome. It catalyses the reaction L-seryl-[protein] + ATP = O-phospho-L-seryl-[protein] + ADP + H(+). The enzyme catalyses L-threonyl-[protein] + ATP = O-phospho-L-threonyl-[protein] + ADP + H(+). The catalysed reaction is L-tyrosyl-[protein] + ATP = O-phospho-L-tyrosyl-[protein] + ADP + H(+). Protein kinase activity is activated following autophosphorylation at Tyr-349. Functionally, dual-specificity protein kinase that promotes disassembly of several types of membraneless organelles during mitosis, such as stress granules, nuclear speckles and pericentriolar material. Dual-specificity tyrosine-regulated kinases (DYRKs) autophosphorylate a critical tyrosine residue in their activation loop and phosphorylate their substrate on serine and threonine residues. Acts as a central dissolvase of membraneless organelles during the G2-to-M transition, after the nuclear-envelope breakdown: acts by mediating phosphorylation of multiple serine and threonine residues in unstructured domains of proteins, such as SRRM1 and PCM1. Does not mediate disassembly of all membraneless organelles: disassembly of P-body and nucleolus is not regulated by DYRK3. Dissolution of membraneless organelles at the onset of mitosis is also required to release mitotic regulators, such as ZNF207, from liquid-unmixed organelles where they are sequestered and keep them dissolved during mitosis. Regulates mTORC1 by mediating the dissolution of stress granules: during stressful conditions, DYRK3 partitions from the cytosol to the stress granule, together with mTORC1 components, which prevents mTORC1 signaling. When stress signals are gone, the kinase activity of DYRK3 is required for the dissolution of stress granule and mTORC1 relocation to the cytosol: acts by mediating the phosphorylation of the mTORC1 inhibitor AKT1S1, allowing full reactivation of mTORC1 signaling. Also acts as a negative regulator of EPO-dependent erythropoiesis: may place an upper limit on red cell production during stress erythropoiesis. Inhibits cell death due to cytokine withdrawal in hematopoietic progenitor cells. Promotes cell survival upon genotoxic stress through phosphorylation of SIRT1: this in turn inhibits p53/TP53 activity and apoptosis. In Macaca fascicularis (Crab-eating macaque), this protein is Dual specificity tyrosine-phosphorylation-regulated kinase 3.